We begin with the raw amino-acid sequence, 367 residues long: 3-dehydroquinate synthase (367 aa).

NAD(+)-binding positions include 112 to 116 (GVIGD), 136 to 137 (TT), K149, K158, and 176 to 179 (TLKT). Zn(2+)-binding residues include E191, H256, and H273.

It belongs to the sugar phosphate cyclases superfamily. Dehydroquinate synthase family. The cofactor is NAD(+). Co(2+) is required as a cofactor. Requires Zn(2+) as cofactor.

It is found in the cytoplasm. It catalyses the reaction 7-phospho-2-dehydro-3-deoxy-D-arabino-heptonate = 3-dehydroquinate + phosphate. It participates in metabolic intermediate biosynthesis; chorismate biosynthesis; chorismate from D-erythrose 4-phosphate and phosphoenolpyruvate: step 2/7. Catalyzes the conversion of 3-deoxy-D-arabino-heptulosonate 7-phosphate (DAHP) to dehydroquinate (DHQ). In Prochlorococcus marinus (strain SARG / CCMP1375 / SS120), this protein is 3-dehydroquinate synthase.